We begin with the raw amino-acid sequence, 1077 residues long: Insulin receptor substrate 2-B (1077 aa).

The tract at residues 1–66 (MAGVLCPTEE…APASTAEDDV (66 aa)) is disordered. 2 short sequence motifs (YXXM motif) span residues 33–36 (YRRM) and 147–150 (YFAM). A PH domain is found at 65 to 170 (DVRKRGYLRK…WYQALSELIN (106 aa)). In terms of domain architecture, IRS-type PTB spans 195–299 (FKEVWQVNVK…DTMKALKAYS (105 aa)). Disordered regions lie at residues 342 to 373 (ETVVGTPPSAKNNSFRFRTSSEGEGTMTRPFR), 428 to 464 (VCSSNGHGSASETLTRPSSSSVCGSPSDGGFISSDEY), and 476 to 495 (VRSNTPDSLGNTPPIQEENT). 2 stretches are compositionally biased toward polar residues: residues 350–364 (SAKNNSFRFRTSSEG) and 428–444 (VCSSNGHGSASETLTRP). The span at 445 to 457 (SSSSVCGSPSDGG) shows a compositional bias: low complexity. The segment covering 477–495 (RSNTPDSLGNTPPIQEENT) has biased composition (polar residues). A YXXM motif 3 motif is present at residues 499–502 (YMSM). Positions 530-544 (KPTNAASQQKSQTAV) are enriched in polar residues. The segment at 530 to 571 (KPTNAASQQKSQTAVSLDEDSEETNKQFAYAESPKLKDSSHV) is disordered. Short sequence motifs (YXXM motif) lie at residues 595-598 (YMPM), 608-611 (YLPM), 634-637 (YMMM), 666-669 (YMDM), 713-716 (YVPM), and 891-894 (YTTM).

Post-translationally, phosphorylated by INSR.

Functionally, potentiates insulin signaling. The chain is Insulin receptor substrate 2-B (irs2-b) from Xenopus laevis (African clawed frog).